The following is a 158-amino-acid chain: Large ribosomal subunit protein uL11 (158 aa).

Positions 1–21 are disordered; it reads MAQSVKTMVEGGKATTGPPIG.

The protein belongs to the universal ribosomal protein uL11 family. In terms of assembly, part of the ribosomal stalk of the 50S ribosomal subunit. Interacts with L10 and the large rRNA to form the base of the stalk. L10 forms an elongated spine to which L12 dimers bind in a sequential fashion forming a multimeric L10(L12)X complex.

Its function is as follows. Forms part of the ribosomal stalk which helps the ribosome interact with GTP-bound translation factors. The sequence is that of Large ribosomal subunit protein uL11 from Thermoplasma volcanium (strain ATCC 51530 / DSM 4299 / JCM 9571 / NBRC 15438 / GSS1).